Consider the following 168-residue polypeptide: MPRSRINGNFIDKTFSIVANILLRVIPTTSGEKEAFTYYRDGMSAQSEGNYAEALQNYYEAMRLEIDPYDRSYILYNIGLIHTSNGEHTKALEYYFRALERNPFLPQAFNNMAVICHYRGEQAIQQGDSEIAEAWFDQAAEYWKQAIALTPGNYIEAHNWLKITRRFE.

TPR repeat units lie at residues 35–68 (AFTY…EIDP), 72–105 (SYIL…NPFL), and 120–153 (GEQA…TPGN).

Belongs to the Ycf3 family.

Its subcellular location is the plastid. It localises to the chloroplast thylakoid membrane. Essential for the assembly of the photosystem I (PSI) complex. May act as a chaperone-like factor to guide the assembly of the PSI subunits. The polypeptide is Photosystem I assembly protein Ycf3 (Nicotiana sylvestris (Wood tobacco)).